The sequence spans 249 residues: Cytoplasmic envelopment protein 1 (249 aa).

The protein belongs to the herpesviridae cytoplasmic envelopment protein 1 family.

It is found in the virion. Its subcellular location is the virion tegument. It localises to the host cytoplasm. The protein localises to the host Golgi apparatus. Its function is as follows. Plays a critical role in cytoplasmic virus egress. Participates in the final step of tegumentation and envelope acquisition within the host cytoplasm. This is Cytoplasmic envelopment protein 1 (UL103) from Homo sapiens (Human).